A 414-amino-acid polypeptide reads, in one-letter code: Transforming growth factor beta-2 proprotein (414 aa).

Positions 1 to 20 (MHYCVLSAFLLLHLVTAALS) are cleaved as a signal peptide. N-linked (GlcNAc...) asparagine glycans are attached at residues N72, N140, and N241. Disulfide bonds link C309–C318, C317–C380, C346–C411, and C350–C413.

This sequence belongs to the TGF-beta family. Interacts with the serine proteases, HTRA1 and HTRA3. Interacts with ASPN. Interacts with MFAP5. As to quaternary structure, interacts with Transforming growth factor beta-2 (TGF-beta-2) chain; interaction is non-covalent and maintains (TGF-beta-2) in a latent state. Interacts with LRRC32/GARP; leading to regulate activation of TGF-beta-2. Interacts with NREP; the interaction results in a decrease in TGFB2 autoinduction. In terms of assembly, transforming growth factor beta-2: Homodimer; disulfide-linked. Transforming growth factor beta-2: Interacts with TGF-beta receptors (TGFBR1 and TGFBR2), leading to signal transduction. The precursor proprotein is cleaved in the Golgi apparatus to form Transforming growth factor beta-2 (TGF-beta-2) and Latency-associated peptide (LAP) chains, which remain non-covalently linked, rendering TGF-beta-2 inactive.

It localises to the secreted. It is found in the extracellular space. The protein resides in the extracellular matrix. Precursor of the Latency-associated peptide (LAP) and Transforming growth factor beta-2 (TGF-beta-2) chains, which constitute the regulatory and active subunit of TGF-beta-2, respectively. Functionally, required to maintain the Transforming growth factor beta-2 (TGF-beta-2) chain in a latent state during storage in extracellular matrix. Associates non-covalently with TGF-beta-2 and regulates its activation via interaction with 'milieu molecules', such as LTBP1 and LRRC32/GARP, that control activation of TGF-beta-2. In terms of biological role, multifunctional protein that regulates various processes such as angiogenesis and heart development. Activation into mature form follows different steps: following cleavage of the proprotein in the Golgi apparatus, Latency-associated peptide (LAP) and Transforming growth factor beta-2 (TGF-beta-2) chains remain non-covalently linked rendering TGF-beta-2 inactive during storage in extracellular matrix. At the same time, LAP chain interacts with 'milieu molecules', such as LTBP1 and LRRC32/GARP, that control activation of TGF-beta-2 and maintain it in a latent state during storage in extracellular milieus. Once activated following release of LAP, TGF-beta-2 acts by binding to TGF-beta receptors (TGFBR1 and TGFBR2), which transduce signal. The sequence is that of Transforming growth factor beta-2 proprotein (TGFB2) from Mustela putorius furo (European domestic ferret).